A 235-amino-acid chain; its full sequence is Alpha-S2-casein (235 aa).

Residues 1–15 (MKFFIFTCLLAVAFA) form the signal peptide. Ser-23, Ser-24, Ser-25, Ser-28, Ser-47, Ser-72, Ser-73, Ser-74, Ser-77, Ser-147, Ser-149, and Ser-168 each carry phosphoserine. Positions 144-158 (EELSTSEEPVSSSQE) are enriched in polar residues. A disordered region spans residues 144 to 163 (EELSTSEEPVSSSQEENTKT).

Belongs to the alpha-casein family. Mammary gland specific. Secreted in milk.

The protein resides in the secreted. In terms of biological role, important role in the capacity of milk to transport calcium phosphate. The sequence is that of Alpha-S2-casein (CSN1S2) from Sus scrofa (Pig).